The sequence spans 443 residues: Protein PRRC1 (443 aa).

Positions 1–165 (MMEESGIETT…FSAPPVTGIL (165 aa)) are disordered. The segment covering 29–45 (EAHSAATSSFSSPNVSG) has biased composition (polar residues). Pro residues predominate over residues 59–72 (PSLPPVQPSAPPPF). 2 stretches are compositionally biased toward low complexity: residues 81–96 (VPLS…SPSP) and 109–134 (PPAT…FSVG). Position 406 is a phosphoserine (Ser-406).

Belongs to the PRRC1 family. Interacts with PRKAR1A; resulting in PKA activation.

The protein localises to the golgi apparatus. It is found in the cytoplasm. Its function is as follows. May act as a regulator of the protein kinase A (PKA) during embryonic development. The polypeptide is Protein PRRC1 (Prrc1) (Mus musculus (Mouse)).